A 393-amino-acid chain; its full sequence is UDP-N-acetylglucosamine--N-acetylmuramyl-(pentapeptide) pyrophosphoryl-undecaprenol N-acetylglucosamine transferase (393 aa).

Residues 14-16 (TAG), asparagine 128, arginine 170, serine 210, and glutamine 321 contribute to the UDP-N-acetyl-alpha-D-glucosamine site.

The protein belongs to the glycosyltransferase 28 family. MurG subfamily.

It localises to the cell membrane. The catalysed reaction is di-trans,octa-cis-undecaprenyl diphospho-N-acetyl-alpha-D-muramoyl-L-alanyl-D-glutamyl-meso-2,6-diaminopimeloyl-D-alanyl-D-alanine + UDP-N-acetyl-alpha-D-glucosamine = di-trans,octa-cis-undecaprenyl diphospho-[N-acetyl-alpha-D-glucosaminyl-(1-&gt;4)]-N-acetyl-alpha-D-muramoyl-L-alanyl-D-glutamyl-meso-2,6-diaminopimeloyl-D-alanyl-D-alanine + UDP + H(+). It participates in cell wall biogenesis; peptidoglycan biosynthesis. Functionally, cell wall formation. Catalyzes the transfer of a GlcNAc subunit on undecaprenyl-pyrophosphoryl-MurNAc-pentapeptide (lipid intermediate I) to form undecaprenyl-pyrophosphoryl-MurNAc-(pentapeptide)GlcNAc (lipid intermediate II). The sequence is that of UDP-N-acetylglucosamine--N-acetylmuramyl-(pentapeptide) pyrophosphoryl-undecaprenol N-acetylglucosamine transferase from Bifidobacterium adolescentis (strain ATCC 15703 / DSM 20083 / NCTC 11814 / E194a).